The primary structure comprises 162 residues: MLDVFTPLLKLFANEPLERLMYTIIIFGLTLWLIPKEFTVAFNAYTEIPWLFQIIVFAFSFVVAISFSRLRAHIQKHYSLLPEQRVLLRLSEKEIAVFKDFLKTGNLIITSPCRNPVMKKLERKGIIQHQSDSANCSYYLVTEKYSHFMKLFWNSRSRRFNR.

The next 2 membrane-spanning stretches (helical) occupy residues 22 to 42 and 48 to 68; these read YTII…TVAF and IPWL…ISFS.

The protein localises to the cell inner membrane. The chain is Superinfection exclusion protein B (sieB) from Escherichia coli (strain K12).